A 147-amino-acid chain; its full sequence is uncharacterized protein (147 aa).

This is an uncharacterized protein from Escherichia coli.